Consider the following 173-residue polypeptide: Ribosome maturation factor RimM (173 aa).

Residues 95–169 form the PRC barrel domain; it reads DPDEFYDHQL…VIEIDPPEGL (75 aa).

This sequence belongs to the RimM family. In terms of assembly, binds ribosomal protein uS19.

It is found in the cytoplasm. Functionally, an accessory protein needed during the final step in the assembly of 30S ribosomal subunit, possibly for assembly of the head region. Essential for efficient processing of 16S rRNA. May be needed both before and after RbfA during the maturation of 16S rRNA. It has affinity for free ribosomal 30S subunits but not for 70S ribosomes. The protein is Ribosome maturation factor RimM of Mycobacteroides abscessus (strain ATCC 19977 / DSM 44196 / CCUG 20993 / CIP 104536 / JCM 13569 / NCTC 13031 / TMC 1543 / L948) (Mycobacterium abscessus).